The chain runs to 365 residues: 3-dehydroquinate synthase (365 aa).

NAD(+) contacts are provided by residues 75–80 (DAENGK), 109–113 (GAATD), 133–134 (TT), Lys-146, and Lys-155. Zn(2+) is bound by residues Glu-188, His-253, and His-269.

Belongs to the sugar phosphate cyclases superfamily. Dehydroquinate synthase family. Co(2+) is required as a cofactor. It depends on Zn(2+) as a cofactor. Requires NAD(+) as cofactor.

It localises to the cytoplasm. The catalysed reaction is 7-phospho-2-dehydro-3-deoxy-D-arabino-heptonate = 3-dehydroquinate + phosphate. It functions in the pathway metabolic intermediate biosynthesis; chorismate biosynthesis; chorismate from D-erythrose 4-phosphate and phosphoenolpyruvate: step 2/7. Its function is as follows. Catalyzes the conversion of 3-deoxy-D-arabino-heptulosonate 7-phosphate (DAHP) to dehydroquinate (DHQ). The chain is 3-dehydroquinate synthase from Corynebacterium glutamicum (strain R).